The following is a 160-amino-acid chain: Lipoprotein signal peptidase (160 aa).

Helical transmembrane passes span 5–25 (LVFF…KFII), 60–80 (IEWL…AFFI), and 84–104 (LPFL…AGTV). Residues D118 and D132 contribute to the active site. Residues 128–148 (FNIADSCLTVGVIGLLLLYIV) form a helical membrane-spanning segment.

It belongs to the peptidase A8 family.

Its subcellular location is the cell membrane. It catalyses the reaction Release of signal peptides from bacterial membrane prolipoproteins. Hydrolyzes -Xaa-Yaa-Zaa-|-(S,diacylglyceryl)Cys-, in which Xaa is hydrophobic (preferably Leu), and Yaa (Ala or Ser) and Zaa (Gly or Ala) have small, neutral side chains.. Its pathway is protein modification; lipoprotein biosynthesis (signal peptide cleavage). This protein specifically catalyzes the removal of signal peptides from prolipoproteins. The protein is Lipoprotein signal peptidase of Dehalococcoides mccartyi (strain ATCC BAA-2100 / JCM 16839 / KCTC 5957 / BAV1).